The sequence spans 342 residues: Lipopolysaccharide heptosyltransferase 1 (342 aa).

ADP-L-glycero-beta-D-manno-heptose contacts are provided by Ser-188, Ser-189, Lys-193, Glu-225, Asp-268, Ser-269, Gly-270, and His-273.

Belongs to the glycosyltransferase 9 family.

The protein localises to the cell inner membrane. It carries out the reaction an alpha-Kdo-(2-&gt;4)-alpha-Kdo-(2-&gt;6)-lipid A + ADP-L-glycero-beta-D-manno-heptose = an L-alpha-D-Hep-(1-&gt;5)-[alpha-Kdo-(2-&gt;4)]-alpha-Kdo-(2-&gt;6)-lipid A + ADP + H(+). It participates in bacterial outer membrane biogenesis; LPS core biosynthesis. Its function is as follows. Glycosyltransferase involved in the biosynthesis of the core oligosaccharide region of lipopolysaccharide (LPS). Catalyzes the addition of the first heptose unit to one 3-deoxy-D-manno-octulosonic acid (Kdo) residue of the Kdo2-lipid A module. The protein is Lipopolysaccharide heptosyltransferase 1 of Campylobacter coli.